The following is a 153-amino-acid chain: Zinc finger protein GIS2 (153 aa).

7 consecutive CCHC-type zinc fingers follow at residues 4–21 (KACY…DCDS), 23–40 (RLCY…DCTM), 47–64 (KQCY…ECTV), 65–82 (QRCF…ECPE), 92–109 (VSCY…DCMK), 116–133 (LKCY…DCQN), and 135–152 (RLCY…DCPK).

It is found in the cytoplasm. Functionally, may act in the sexual differentiation pathway. The polypeptide is Zinc finger protein GIS2 (GIS2) (Saccharomyces cerevisiae (strain ATCC 204508 / S288c) (Baker's yeast)).